Here is a 116-residue protein sequence, read N- to C-terminus: UPF0482 protein ECA2253 (116 aa).

A signal peptide spans 1-31; sequence MNHYSFSSLIRALIPLSLVIVSAVWQPAALA.

It belongs to the UPF0482 family.

The protein is UPF0482 protein ECA2253 of Pectobacterium atrosepticum (strain SCRI 1043 / ATCC BAA-672) (Erwinia carotovora subsp. atroseptica).